The primary structure comprises 503 residues: Maturase K (503 aa).

Belongs to the intron maturase 2 family. MatK subfamily.

It is found in the plastid. The protein resides in the chloroplast. Usually encoded in the trnK tRNA gene intron. Probably assists in splicing its own and other chloroplast group II introns. The sequence is that of Maturase K from Kunzea baxteri (Scarlet kunzea).